The primary structure comprises 157 residues: Arginine repressor (157 aa).

This sequence belongs to the ArgR family.

It is found in the cytoplasm. The protein operates within amino-acid biosynthesis; L-arginine biosynthesis [regulation]. Functionally, regulates arginine biosynthesis genes. The polypeptide is Arginine repressor (Deinococcus deserti (strain DSM 17065 / CIP 109153 / LMG 22923 / VCD115)).